We begin with the raw amino-acid sequence, 229 residues long: Small ribosomal subunit protein mS23 (229 aa).

The protein belongs to the mitochondrion-specific ribosomal protein mS23 family. As to quaternary structure, component of the mitochondrial small ribosomal subunit.

The protein resides in the mitochondrion. In Yarrowia lipolytica (strain CLIB 122 / E 150) (Yeast), this protein is Small ribosomal subunit protein mS23 (RSM25).